Reading from the N-terminus, the 487-residue chain is Glucose starvation modulator protein 1 (487 aa).

The interval 1 to 75 (MSIRFPEIPG…KRLTPQEKKA (75 aa)) is disordered. The span at 59 to 68 (SFSSSMTKRL) shows a compositional bias: polar residues. The zn(2)-C6 fungal-type DNA-binding region spans 83 to 111 (CVFCHSKHLQCSHSRPCQNCIKRNLAHEC). The segment covering 122–139 (MSTTEVPAVSGESSSESG) has biased composition (polar residues). A disordered region spans residues 122–158 (MSTTEVPAVSGESSSESGRATGENGSEMGNPPDPQIA). In terms of domain architecture, PAS spans 348–420 (CLLDYENLSR…FRLFESVAVG (73 aa)).

Belongs to the ERT1/acuK family.

The protein resides in the nucleus. Functionally, transcription factor which regulates nonfermentable carbon utilization. The chain is Glucose starvation modulator protein 1 (GSM1) from Clavispora lusitaniae (strain ATCC 42720) (Yeast).